The following is a 316-amino-acid chain: Holliday junction branch migration complex subunit RuvB (316 aa).

The interval 1–165 (MQITRPHNFE…FGYIARFVSY (165 aa)) is large ATPase domain (RuvB-L). ATP is bound by residues Arg5, Gly46, Lys49, Thr50, Ser51, 112–114 (EDF), Arg155, Tyr165, and Arg202. Thr50 contacts Mg(2+). The interval 166–236 (NAEDMKQIIR…IIKKTFKSLD (71 aa)) is small ATPAse domain (RuvB-S). The interval 239 to 316 (EYGLTKDHVE…TYLLKEKLIW (78 aa)) is head domain (RuvB-H). DNA is bound by residues Lys294 and Arg299.

Belongs to the RuvB family. As to quaternary structure, homohexamer. Forms an RuvA(8)-RuvB(12)-Holliday junction (HJ) complex. HJ DNA is sandwiched between 2 RuvA tetramers; dsDNA enters through RuvA and exits via RuvB. An RuvB hexamer assembles on each DNA strand where it exits the tetramer. Each RuvB hexamer is contacted by two RuvA subunits (via domain III) on 2 adjacent RuvB subunits; this complex drives branch migration. In the full resolvosome a probable DNA-RuvA(4)-RuvB(12)-RuvC(2) complex forms which resolves the HJ.

The protein resides in the cytoplasm. The catalysed reaction is ATP + H2O = ADP + phosphate + H(+). Its function is as follows. The RuvA-RuvB-RuvC complex processes Holliday junction (HJ) DNA during genetic recombination and DNA repair, while the RuvA-RuvB complex plays an important role in the rescue of blocked DNA replication forks via replication fork reversal (RFR). RuvA specifically binds to HJ cruciform DNA, conferring on it an open structure. The RuvB hexamer acts as an ATP-dependent pump, pulling dsDNA into and through the RuvAB complex. RuvB forms 2 homohexamers on either side of HJ DNA bound by 1 or 2 RuvA tetramers; 4 subunits per hexamer contact DNA at a time. Coordinated motions by a converter formed by DNA-disengaged RuvB subunits stimulates ATP hydrolysis and nucleotide exchange. Immobilization of the converter enables RuvB to convert the ATP-contained energy into a lever motion, pulling 2 nucleotides of DNA out of the RuvA tetramer per ATP hydrolyzed, thus driving DNA branch migration. The RuvB motors rotate together with the DNA substrate, which together with the progressing nucleotide cycle form the mechanistic basis for DNA recombination by continuous HJ branch migration. Branch migration allows RuvC to scan DNA until it finds its consensus sequence, where it cleaves and resolves cruciform DNA. In Mycoplasmopsis synoviae (strain 53) (Mycoplasma synoviae), this protein is Holliday junction branch migration complex subunit RuvB.